A 253-amino-acid polypeptide reads, in one-letter code: Large ribosomal subunit protein uL4 (253 aa).

The interval 62-107 is disordered; that stretch reads WGSGRGVSHVPRLKNSSRAARVPHAKGGRRAHPPKPEADRSEKVNT. The segment covering 82-94 has biased composition (basic residues); it reads RVPHAKGGRRAHP. Residues 95 to 107 show a composition bias toward basic and acidic residues; sequence PKPEADRSEKVNT.

The protein belongs to the universal ribosomal protein uL4 family. In terms of assembly, part of the 50S ribosomal subunit.

Its function is as follows. One of the primary rRNA binding proteins, this protein initially binds near the 5'-end of the 23S rRNA. It is important during the early stages of 50S assembly. It makes multiple contacts with different domains of the 23S rRNA in the assembled 50S subunit and ribosome. Forms part of the polypeptide exit tunnel. The chain is Large ribosomal subunit protein uL4 from Methanosarcina mazei (strain ATCC BAA-159 / DSM 3647 / Goe1 / Go1 / JCM 11833 / OCM 88) (Methanosarcina frisia).